We begin with the raw amino-acid sequence, 245 residues long: Histone deacetylase HDT1 (245 aa).

Methionine 1 carries the N-acetylmethionine modification. 2 required to repress transcription regions span residues 2 to 5 (EFWG) and 101 to 162 (GYSE…EEEE). Residues 99-245 (PQGYSEEEEE…HNKAKHAAAK (147 aa)) are disordered. A compositionally biased stretch (acidic residues) spans 103-113 (SEEEEEEEEEV). Residues 114–124 (PAGNAAKAVAK) show a composition bias toward low complexity. The segment covering 137 to 162 (DDEEDESDSDGMDEDDSDGEDSEEEE) has biased composition (acidic residues). The segment covering 178 to 195 (TTPKAPVSAKKAKVAVTP) has biased composition (low complexity). Residues 208–234 (ANQSPKSASQVSCGSCKKTFNSGNALE) show a composition bias toward polar residues. At serine 211 the chain carries Phosphoserine. A C2H2-type zinc finger spans residues 218-241 (VSCGSCKKTFNSGNALESHNKAKH).

This sequence belongs to the histone deacetylase HD2 family. In terms of assembly, interacts with DNMT2. Interacts with DEK3. As to expression, expressed in leaves, roots, stems, young plantlets, flowers and siliques. Highest levels in ovules, embryos, shoot apical meristems and first leaves. Also expressed in somatic embryos.

It is found in the nucleus. The protein resides in the nucleolus. Functionally, probably mediates the deacetylation of lysine residues on the N-terminal part of the core histones (H2A, H2B, H3 and H4). Histone deacetylation gives a tag for epigenetic repression and plays an important role in transcriptional regulation, cell cycle progression and developmental events. Required for histone H3 'Lys-9' deacetylation. Involved in rRNA gene silencing in nucleolar dominance. Seems to be implicated in the regulation of genes involved in seeds development. In Arabidopsis thaliana (Mouse-ear cress), this protein is Histone deacetylase HDT1.